A 555-amino-acid chain; its full sequence is Efflux pump FUS6 (555 aa).

Residues 1–23 (MASAKDAQPAPEKSLSSDPQPEP) are disordered. 5 consecutive transmembrane segments (helical) span residues 31–51 (WLIF…TSII), 67–87 (LYVW…PIFA), 97–117 (SLTL…GGAH), 130–150 (GIGG…MVSI), and 159–179 (IIGG…GAFA). The N-linked (GlcNAc...) asparagine glycan is linked to N181. The next 3 membrane-spanning stretches (helical) occupy residues 186-206 (WIFY…GLFL), 225-245 (WGGS…LSWG), and 253-273 (GWQT…FFAY). Residue N291 is glycosylated (N-linked (GlcNAc...) asparagine). The next 6 helical transmembrane spans lie at 297–317 (LLVI…FLPV), 332–352 (VMLF…GITI), 360–380 (VWHF…TLLD), 393–413 (ILFG…ILAS), 425–445 (AWTF…AAVF), and 501–521 (KVVW…CFFV). N545 is a glycosylation site (N-linked (GlcNAc...) asparagine).

It belongs to the major facilitator superfamily. TCR/Tet family.

Its subcellular location is the membrane. Functionally, efflux pump; part of the gene cluster that mediates the biosynthesis of the mycotoxin fusarin C. Within the cluster, FUS1, FUS2, FUS8 and FUS9 are sufficient for fusarin production. The other FUS cluster members are not essential for fusarin C biosynthesis. The chain is Efflux pump FUS6 from Gibberella fujikuroi (strain CBS 195.34 / IMI 58289 / NRRL A-6831) (Bakanae and foot rot disease fungus).